The primary structure comprises 103 residues: Histone H4 (103 aa).

Lys-6 carries the N6-acetyl-N6-methyllysine; alternate modification. An N6-methyllysine; alternate mark is found at Lys-6, Lys-9, and Lys-13. Lys-13 carries the N6-acetyl-N6-methyllysine; alternate modification. The DNA-binding element occupies 17-21 (KRHRK). Lys-92 is subject to N6-glutaryllysine.

It belongs to the histone H4 family. As to quaternary structure, the nucleosome is a histone octamer containing two molecules each of H2A, H2B, H3 and H4 assembled in one H3-H4 heterotetramer and two H2A-H2B heterodimers. The octamer wraps approximately 147 bp of DNA. In terms of processing, glutarylation at Lys-92 (H4K91glu) destabilizes nucleosomes by promoting dissociation of the H2A-H2B dimers from nucleosomes.

Its subcellular location is the nucleus. The protein resides in the chromosome. In terms of biological role, core component of nucleosome. Nucleosomes wrap and compact DNA into chromatin, limiting DNA accessibility to the cellular machineries which require DNA as a template. Histones thereby play a central role in transcription regulation, DNA repair, DNA replication and chromosomal stability. DNA accessibility is regulated via a complex set of post-translational modifications of histones, also called histone code, and nucleosome remodeling. This chain is Histone H4 (H4.1), found in Mortierella alpina (Oleaginous fungus).